Here is a 472-residue protein sequence, read N- to C-terminus: Alanine--anticapsin ligase (472 aa).

E109 is a Mg(2+) binding site. Residues K138 and K178 each coordinate ATP. An ATP-grasp domain is found at 142-355 (RAAFNRAGVK…MAQLLLDVLC (214 aa)). Residue L182 coordinates Mg(2+). Residues 184–185 (SS), 226–229 (EEFL), and Q268 contribute to the ATP site. Residues E273 and 309–311 (HTE) contribute to the substrate site. Residues E311 and E324 each coordinate Mg(2+). 328 to 331 (RFAG) is a binding site for substrate.

In terms of assembly, monomer or homodimer. Mg(2+) is required as a cofactor.

The catalysed reaction is L-anticapsin + L-alanine + ATP = bacilysin + ADP + phosphate + H(+). Its pathway is antibiotic biosynthesis; bacilysin biosynthesis. In terms of biological role, part of the bacABCDEFG operon responsible for the biosynthesis of bacilysin, an irreversible inactivator of the glutaminase domain of glucosamine synthetase. Catalyzes the formation of alpha-dipeptides from various L-amino acids in the presence of ATP. In vivo catalyzes the ligation of L-alanine and L-anticapsin (epoxycyclohexanonyl-Ala) to produce the final bacilysin antibiotic (L-Ala-L-4S-cyclohexenonyl-Ala dipeptide). This Bacillus subtilis protein is Alanine--anticapsin ligase.